A 513-amino-acid polypeptide reads, in one-letter code: V-type proton ATPase subunit B (513 aa).

Residue R375 coordinates ATP. Basic and acidic residues predominate over residues 484–503; that stretch reads ADRKGKGKDKPTTKDTRDTA. Residues 484–513 are disordered; that stretch reads ADRKGKGKDKPTTKDTRDTAAPEEENLIDA. Acidic residues predominate over residues 504–513; the sequence is APEEENLIDA.

The protein belongs to the ATPase alpha/beta chains family. In terms of assembly, V-ATPase is a heteromultimeric enzyme composed of a peripheral catalytic V1 complex (components A to H) attached to an integral membrane V0 proton pore complex (components: a, c, c', c'', d, e, f and VOA1).

The protein resides in the vacuole membrane. Non-catalytic subunit of the V1 complex of vacuolar(H+)-ATPase (V-ATPase), a multisubunit enzyme composed of a peripheral complex (V1) that hydrolyzes ATP and a membrane integral complex (V0) that translocates protons. V-ATPase is responsible for acidifying and maintaining the pH of intracellular compartments. This chain is V-type proton ATPase subunit B, found in Neurospora crassa (strain ATCC 24698 / 74-OR23-1A / CBS 708.71 / DSM 1257 / FGSC 987).